Consider the following 278-residue polypeptide: Biotin synthase (278 aa).

The 227-residue stretch at 1–227 (MQIMLCAISN…QSVVMVAGGR (227 aa)) folds into the Radical SAM core domain. Residues cysteine 16, cysteine 20, and cysteine 23 each contribute to the [4Fe-4S] cluster site. Residues cysteine 60, cysteine 95, and cysteine 153 each coordinate [2Fe-2S] cluster.

It belongs to the radical SAM superfamily. Biotin synthase family. In terms of assembly, homodimer. [4Fe-4S] cluster serves as cofactor. The cofactor is [2Fe-2S] cluster.

It carries out the reaction (4R,5S)-dethiobiotin + (sulfur carrier)-SH + 2 reduced [2Fe-2S]-[ferredoxin] + 2 S-adenosyl-L-methionine = (sulfur carrier)-H + biotin + 2 5'-deoxyadenosine + 2 L-methionine + 2 oxidized [2Fe-2S]-[ferredoxin]. It participates in cofactor biosynthesis; biotin biosynthesis; biotin from 7,8-diaminononanoate: step 2/2. Catalyzes the conversion of dethiobiotin (DTB) to biotin by the insertion of a sulfur atom into dethiobiotin via a radical-based mechanism. This is Biotin synthase from Campylobacter jejuni subsp. jejuni serotype O:6 (strain 81116 / NCTC 11828).